Reading from the N-terminus, the 823-residue chain is Polyadenylation and cleavage factor homolog 11 (823 aa).

One can recognise a CID domain in the interval 3–135 (SVESAARDYR…ELDMKINKLD (133 aa)). Disordered regions lie at residues 142–176 (NPQT…STST), 188–301 (SSTP…KTLK), 340–395 (SSAP…LPAP), 570–643 (LPAP…EKRS), and 728–755 (WLTP…VASS). Composition is skewed to polar residues over residues 157 to 176 (APSQ…STST) and 188 to 198 (SSTPGAASASK). Over residues 200-226 (VVEKTKSPGTVNKEKQVKKEPKQDPLD) the composition is skewed to basic and acidic residues. 2 stretches are compositionally biased toward low complexity: residues 227 to 242 (KLLP…SSPA) and 342 to 353 (APPFQHPQQHHP). A compositionally biased stretch (pro residues) spans 374-390 (PQDPAPIVPVQAPPPQQ). Over residues 571–581 (PAPARSPSSPR) the composition is skewed to low complexity. Over residues 609 to 624 (QPQQNARWGGANKQQN) the composition is skewed to polar residues.

The protein is Polyadenylation and cleavage factor homolog 11 (pcf-11) of Caenorhabditis elegans.